Here is a 511-residue protein sequence, read N- to C-terminus: Type 2 DNA topoisomerase 6 subunit B-like (511 aa).

The tract at residues 398-485 (DSAQGTEDAP…RALAPGRASL (88 aa)) is disordered. Polar residues predominate over residues 408–422 (DNSSLELLADTSGQA). Over residues 440–451 (LRSARAPSPSEA) the composition is skewed to low complexity. The segment covering 466-475 (RGREHREAHG) has biased composition (basic and acidic residues).

The protein belongs to the TOP6B-like family. As to quaternary structure, heterotetramer of SPO11 and 2 TOP6BL chains. Interacts with SPO11. Detected in lung, spleen,colon and in skeletal muscle. Expressed in the ovaries, Fallopian tubes and uterus.

The protein resides in the chromosome. Component of a topoisomerase 6 complex specifically required for meiotic recombination. Together with SPO11, mediates DNA cleavage that forms the double-strand breaks (DSB) that initiate meiotic recombination. The complex promotes relaxation of negative and positive supercoiled DNA and DNA decatenation through cleavage and ligation cycles. The chain is Type 2 DNA topoisomerase 6 subunit B-like from Homo sapiens (Human).